A 950-amino-acid polypeptide reads, in one-letter code: Lon protease homolog, mitochondrial (950 aa).

Residues 1–65 constitute a mitochondrion transit peptide; sequence MAASTGYVRL…VPMGGGQWRG (65 aa). 2 disordered regions span residues 67–94 and 212–243; these read WDAG…SGEG and PEGL…LGAK. Residues 112–360 form the Lon N-terminal domain; that stretch reads LPLIAISRNP…KALSLLKKEF (249 aa). A compositionally biased stretch (basic residues) spans 224-233; the sequence is KSRRKLKRGK. 513-520 provides a ligand contact to ATP; the sequence is GPPGVGKT. One can recognise a Lon proteolytic domain in the interval 749-939; the sequence is VTPPGVVMGL…RDIFRIAFPL (191 aa). Residues Ser845 and Lys888 contribute to the active site.

The protein belongs to the peptidase S16 family. In terms of assembly, homohexamer. Organized in a ring with a central cavity. The ATP-binding and proteolytic domains (AP-domain) form a hexameric chamber, while the N-terminal domain is arranged as a trimer of dimers. DNA and RNA binding is stimulated by substrate and inhibited by ATP binding. Interacts with TWNK and mitochondrial DNA polymerase subunit POLG.

The protein localises to the mitochondrion matrix. The catalysed reaction is Hydrolysis of proteins in presence of ATP.. In terms of biological role, ATP-dependent serine protease that mediates the selective degradation of misfolded, unassembled or oxidatively damaged polypeptides as well as certain short-lived regulatory proteins in the mitochondrial matrix. Endogenous substrates include mitochondrial steroidogenic acute regulatory (StAR) protein, DELE1, helicase Twinkle (TWNK) and the large ribosomal subunit protein MRPL32/bL32m. MRPL32/bL32m is protected from degradation by LONP1 when it is bound to a nucleic acid (RNA), but TWNK is not. May also have a chaperone function in the assembly of inner membrane protein complexes. Participates in the regulation of mitochondrial gene expression and in the maintenance of the integrity of the mitochondrial genome. Binds to mitochondrial promoters and RNA in a single-stranded, site-specific, and strand-specific manner. May regulate mitochondrial DNA replication and/or gene expression using site-specific, single-stranded DNA binding to target the degradation of regulatory proteins binding to adjacent sites in mitochondrial promoters. This chain is Lon protease homolog, mitochondrial (Lonp1), found in Rattus norvegicus (Rat).